A 559-amino-acid chain; its full sequence is T-complex protein 1 subunit gamma (559 aa).

C368 and C374 are disulfide-bonded. The disordered stretch occupies residues 531–559 (KDKRGGAGQRGGDRGQGDQEETFGDQRDG).

This sequence belongs to the TCP-1 chaperonin family. In terms of assembly, heterooligomeric complex of about 850 to 900 kDa that forms two stacked rings, 12 to 16 nm in diameter.

It is found in the cytoplasm. In terms of biological role, molecular chaperone; assists the folding of proteins upon ATP hydrolysis. Known to play a role, in vitro, in the folding of actin and tubulin. The chain is T-complex protein 1 subunit gamma from Oxytricha granulifera (Ciliate).